We begin with the raw amino-acid sequence, 408 residues long: Acetate kinase (408 aa).

Asn7 contributes to the Mg(2+) binding site. Position 14 (Lys14) interacts with ATP. Residue Arg91 coordinates substrate. The active-site Proton donor/acceptor is Asp148. ATP contacts are provided by residues 208–212, 283–285, and 331–335; these read HLGNG, DFR, and GIGEN. Position 384 (Glu384) interacts with Mg(2+).

This sequence belongs to the acetokinase family. In terms of assembly, homodimer. Mg(2+) serves as cofactor. The cofactor is Mn(2+).

The protein resides in the cytoplasm. It carries out the reaction acetate + ATP = acetyl phosphate + ADP. The protein operates within metabolic intermediate biosynthesis; acetyl-CoA biosynthesis; acetyl-CoA from acetate: step 1/2. Functionally, catalyzes the formation of acetyl phosphate from acetate and ATP. Can also catalyze the reverse reaction. The protein is Acetate kinase of Methanosarcina acetivorans (strain ATCC 35395 / DSM 2834 / JCM 12185 / C2A).